Consider the following 238-residue polypeptide: Ribonuclease M (238 aa).

Cystine bridges form between cysteine 5–cysteine 22, cysteine 13–cysteine 58, cysteine 21–cysteine 126, cysteine 66–cysteine 118, and cysteine 191–cysteine 225. Residue histidine 51 is part of the active site. N-linked (GlcNAc...) asparagine glycosylation is present at asparagine 74. Residues glutamate 111 and histidine 115 contribute to the active site.

The protein belongs to the RNase T2 family.

It catalyses the reaction a ribonucleotidyl-ribonucleotide-RNA + H2O = a 3'-end 3'-phospho-ribonucleotide-RNA + a 5'-end dephospho-ribonucleoside-RNA + H(+). In terms of biological role, this is a base non-specific and adenylic acid preferential ribonuclease. The sequence is that of Ribonuclease M from Aspergillus phoenicis (Aspergillus saitoi).